A 174-amino-acid chain; its full sequence is Protein GrpE (174 aa).

Positions 1–35 (MAQDIKNEEVEEVQEEEVVETAEETTPEKSELDLA) are disordered. Positions 9-25 (EVEEVQEEEVVETAEET) are enriched in acidic residues. The span at 26–35 (TPEKSELDLA) shows a compositional bias: basic and acidic residues.

The protein belongs to the GrpE family. Homodimer.

The protein localises to the cytoplasm. Functionally, participates actively in the response to hyperosmotic and heat shock by preventing the aggregation of stress-denatured proteins, in association with DnaK and GrpE. It is the nucleotide exchange factor for DnaK and may function as a thermosensor. Unfolded proteins bind initially to DnaJ; upon interaction with the DnaJ-bound protein, DnaK hydrolyzes its bound ATP, resulting in the formation of a stable complex. GrpE releases ADP from DnaK; ATP binding to DnaK triggers the release of the substrate protein, thus completing the reaction cycle. Several rounds of ATP-dependent interactions between DnaJ, DnaK and GrpE are required for fully efficient folding. The chain is Protein GrpE from Streptococcus pneumoniae (strain ATCC 700669 / Spain 23F-1).